A 194-amino-acid polypeptide reads, in one-letter code: Probable nicotinate-nucleotide adenylyltransferase (194 aa).

This sequence belongs to the NadD family.

The catalysed reaction is nicotinate beta-D-ribonucleotide + ATP + H(+) = deamido-NAD(+) + diphosphate. It participates in cofactor biosynthesis; NAD(+) biosynthesis; deamido-NAD(+) from nicotinate D-ribonucleotide: step 1/1. Catalyzes the reversible adenylation of nicotinate mononucleotide (NaMN) to nicotinic acid adenine dinucleotide (NaAD). This chain is Probable nicotinate-nucleotide adenylyltransferase, found in Brucella suis biovar 1 (strain 1330).